A 284-amino-acid chain; its full sequence is MGVESVRCPLHFTKMQGAGNDFVVLDLRDGTPPPDAALVAWLADRHFGIGCDQVIAIEPPRGVGVFAAYRIWNADGSAAQQCGNGARCVAAWLVRDGSVATEHFLIDSPVQTHSVRCIGKDEYAVEMGLPVFEPERIPLSGFPNALGEYVLSLQGEVLCCGAVSMGNPHAVVEVDLIDVAPVERIGPLLQQHSAFPESVNVSFVQVIDPGLVRLRVYERGAGETLACGSGACAAAVVLMQRGRVGRDVRVVLPGGTLRVQWPVSGGPVTLSGPARCVFDGVWYG.

3 residues coordinate substrate: Asn-20, Gln-53, and Asn-73. Cys-82 (proton donor) is an active-site residue. Residues 83–84, Asn-167, Asn-200, and 218–219 contribute to the substrate site; these read GN and ER. The Proton acceptor role is filled by Cys-227. 228–229 lines the substrate pocket; it reads GS.

Belongs to the diaminopimelate epimerase family. Homodimer.

The protein resides in the cytoplasm. The enzyme catalyses (2S,6S)-2,6-diaminopimelate = meso-2,6-diaminopimelate. The protein operates within amino-acid biosynthesis; L-lysine biosynthesis via DAP pathway; DL-2,6-diaminopimelate from LL-2,6-diaminopimelate: step 1/1. Its function is as follows. Catalyzes the stereoinversion of LL-2,6-diaminopimelate (L,L-DAP) to meso-diaminopimelate (meso-DAP), a precursor of L-lysine and an essential component of the bacterial peptidoglycan. The sequence is that of Diaminopimelate epimerase from Xylella fastidiosa (strain M23).